Consider the following 261-residue polypeptide: Hydroxyethylthiazole kinase (261 aa).

Position 45 (Met-45) interacts with substrate. ATP contacts are provided by Arg-121 and Ser-167. Gly-194 contacts substrate.

It belongs to the Thz kinase family. Mg(2+) is required as a cofactor.

The enzyme catalyses 5-(2-hydroxyethyl)-4-methylthiazole + ATP = 4-methyl-5-(2-phosphooxyethyl)-thiazole + ADP + H(+). It participates in cofactor biosynthesis; thiamine diphosphate biosynthesis; 4-methyl-5-(2-phosphoethyl)-thiazole from 5-(2-hydroxyethyl)-4-methylthiazole: step 1/1. Catalyzes the phosphorylation of the hydroxyl group of 4-methyl-5-beta-hydroxyethylthiazole (THZ). The chain is Hydroxyethylthiazole kinase from Vibrio atlanticus (strain LGP32) (Vibrio splendidus (strain Mel32)).